Here is a 318-residue protein sequence, read N- to C-terminus: Ribose-phosphate pyrophosphokinase 2 (318 aa).

96-101 (RQDKKD) serves as a coordination point for ATP. Mg(2+) is bound by residues Asp128, His130, Asp139, and Asp143. An ATP-binding site is contributed by His130. The tract at residues 212–227 (KDRVAILVDDMADTCG) is binding of phosphoribosylpyrophosphate.

This sequence belongs to the ribose-phosphate pyrophosphokinase family. Homodimer. The active form is probably a hexamer composed of 3 homodimers. The cofactor is Mg(2+).

It catalyses the reaction D-ribose 5-phosphate + ATP = 5-phospho-alpha-D-ribose 1-diphosphate + AMP + H(+). It participates in metabolic intermediate biosynthesis; 5-phospho-alpha-D-ribose 1-diphosphate biosynthesis; 5-phospho-alpha-D-ribose 1-diphosphate from D-ribose 5-phosphate (route I): step 1/1. Its activity is regulated as follows. Activated by magnesium and inorganic phosphate. Competitively or non-competitively inhibited by ADP, 2,3-bisphosphoglyceride or GDP. In terms of biological role, catalyzes the synthesis of phosphoribosylpyrophosphate (PRPP) that is essential for nucleotide synthesis. The chain is Ribose-phosphate pyrophosphokinase 2 (Prps2) from Mus musculus (Mouse).